A 514-amino-acid polypeptide reads, in one-letter code: Nitric oxide reductase transcription regulator NorR1 (514 aa).

At Asp54 the chain carries 4-aspartylphosphate. One can recognise a Sigma-54 factor interaction domain in the interval 187–416 (IIGQSQAIAG…LEHVISRAAL (230 aa)). Residues 215 to 222 (GETGVGKE) and 287 to 296 (EVGELPLSIQ) contribute to the ATP site. Positions 490 to 509 (WAKAARQLGMDASNLHKLAK) form a DNA-binding region, H-T-H motif.

The protein operates within nitrogen metabolism; nitrate reduction (denitrification) [regulation]. Functionally, required for the nitric oxide (NO) induced expression of NO reductase. Not required for expression of 2 other pathway members, nitrate reductase (nirS) and nitrous oxide reductase (nosZ). The polypeptide is Nitric oxide reductase transcription regulator NorR1 (norR1) (Cupriavidus necator (strain ATCC 17699 / DSM 428 / KCTC 22496 / NCIMB 10442 / H16 / Stanier 337) (Ralstonia eutropha)).